A 320-amino-acid polypeptide reads, in one-letter code: Olfactory receptor 12D1 (320 aa).

Over 1–23 (MLNTTSVTEFLLLGVTDIQELQP) the chain is Extracellular. An N-linked (GlcNAc...) asparagine glycan is attached at Asn3. Residues 24–44 (FLFVVFLTIYFISVAGNGAIL) form a helical membrane-spanning segment. The Cytoplasmic segment spans residues 45–55 (MIVISDPRLHS). The helical transmembrane segment at 56–76 (PMYFFLGNLSCLDICYSSVTL) threads the bilayer. Over 77–97 (PKMLQNFLSAHKAISFLGCIS) the chain is Extracellular. Cysteines 95 and 177 form a disulfide. Residues 98-118 (QLHFFHFLGSTEAMLLAVMAF) form a helical membrane-spanning segment. Residues 119–141 (DRFVAICKPLRYTVIMNPQLCTQ) are Cytoplasmic-facing. Residues 142–162 (MAITIWMIGFFHALLHSLMTS) traverse the membrane as a helical segment. Residues 163 to 203 (RLNFCGSNRIYHFFCDVKPLLKLACGNTELNQWLLSTVTGT) lie on the Extracellular side of the membrane. The helical transmembrane segment at 204–224 (IAMGPFFLTLLSYFYIITHLF) threads the bilayer. Residues 225–238 (FKTHSFSMLRKALS) are Cytoplasmic-facing. Residues 239–259 (TCASHFMVVILLYAPVLFTYI) form a helical membrane-spanning segment. Over 260-270 (HHASGTSMDQD) the chain is Extracellular. The helical transmembrane segment at 271–291 (RITAIMYTVVTPVLNPLIYTL) threads the bilayer. Residues 292–320 (RNKEVKGAFNRAMKRWLWPKEILKNSSEA) are Cytoplasmic-facing.

The protein belongs to the G-protein coupled receptor 1 family.

Its subcellular location is the cell membrane. Functionally, odorant receptor. The chain is Olfactory receptor 12D1 (OR12D1) from Homo sapiens (Human).